A 312-amino-acid polypeptide reads, in one-letter code: Olfactory receptor 2B8 (312 aa).

At 1–25 (MDQKNGSSFTGFILLGFSDRPQLEL) the chain is on the extracellular side. Asn5 carries N-linked (GlcNAc...) asparagine glycosylation. Residues 26 to 49 (VLFVVLLIFYIFTLLGNKTIIVLS) form a helical membrane-spanning segment. Residues 50–57 (HLDPHLHT) lie on the Cytoplasmic side of the membrane. A helical transmembrane segment spans residues 58-79 (PMYFFFSNLSFLDLCYTTGIVP). At 80–100 (QLLVNLRGADKSISYGGCVVQ) the chain is on the extracellular side. Cys97 and Cys189 form a disulfide bridge. A helical transmembrane segment spans residues 101–120 (LYISLGLGSTECVLLGVMVF). Residues 121–139 (DRYAAVCRPLHYTVVMHPC) are Cytoplasmic-facing. Residues 140-158 (LYVLMASTSWVIGFANSLL) form a helical membrane-spanning segment. The Extracellular segment spans residues 159-195 (QTVLILLLTLCGRNKLEHFLCEVPPLLKLACVDTTMN). N-linked (GlcNAc...) asparagine glycosylation is present at Asn195. A helical transmembrane segment spans residues 196-219 (ESELFFVSVIILLVPVALIIFSYS). Residues 220 to 236 (QIVRAVMRIKLATGQRK) are Cytoplasmic-facing. A helical transmembrane segment spans residues 237 to 259 (VFGTCGSHLTVVSLFYGTAIYAY). The Extracellular portion of the chain corresponds to 260-272 (LQPGNNYSQDQGK). Asn265 is a glycosylation site (N-linked (GlcNAc...) asparagine). The helical transmembrane segment at 273 to 292 (FISLFYTIITPMINPLIYTL) threads the bilayer. Residues 293 to 312 (RNKDVKGALKKVLWKNYDSR) are Cytoplasmic-facing.

It belongs to the G-protein coupled receptor 1 family.

It is found in the cell membrane. Functionally, odorant receptor. The sequence is that of Olfactory receptor 2B8 from Homo sapiens (Human).